A 180-amino-acid chain; its full sequence is Large ribosomal subunit protein uL5 (180 aa).

This sequence belongs to the universal ribosomal protein uL5 family. In terms of assembly, part of the 50S ribosomal subunit; part of the 5S rRNA/L5/L18/L25 subcomplex. Contacts the 5S rRNA and the P site tRNA. Forms a bridge to the 30S subunit in the 70S ribosome.

This is one of the proteins that bind and probably mediate the attachment of the 5S RNA into the large ribosomal subunit, where it forms part of the central protuberance. In the 70S ribosome it contacts protein S13 of the 30S subunit (bridge B1b), connecting the 2 subunits; this bridge is implicated in subunit movement. Contacts the P site tRNA; the 5S rRNA and some of its associated proteins might help stabilize positioning of ribosome-bound tRNAs. The chain is Large ribosomal subunit protein uL5 from Clostridium acetobutylicum (strain ATCC 824 / DSM 792 / JCM 1419 / IAM 19013 / LMG 5710 / NBRC 13948 / NRRL B-527 / VKM B-1787 / 2291 / W).